Reading from the N-terminus, the 125-residue chain is Small ribosomal subunit protein uS13 (125 aa).

This sequence belongs to the universal ribosomal protein uS13 family. In terms of assembly, part of the 30S ribosomal subunit. Forms a loose heterodimer with protein S19. Forms two bridges to the 50S subunit in the 70S ribosome.

Its function is as follows. Located at the top of the head of the 30S subunit, it contacts several helices of the 16S rRNA. In the 70S ribosome it contacts the 23S rRNA (bridge B1a) and protein L5 of the 50S subunit (bridge B1b), connecting the 2 subunits; these bridges are implicated in subunit movement. Contacts the tRNAs in the A and P-sites. The polypeptide is Small ribosomal subunit protein uS13 (Rickettsia felis (strain ATCC VR-1525 / URRWXCal2) (Rickettsia azadi)).